The sequence spans 306 residues: Pyridoxal 5'-phosphate synthase subunit SNZERR (306 aa).

Residue Asp-34 participates in D-ribose 5-phosphate binding. The active-site Schiff-base intermediate with D-ribose 5-phosphate is the Lys-91. Gly-163 is a D-ribose 5-phosphate binding site. A D-glyceraldehyde 3-phosphate-binding site is contributed by Arg-175. D-ribose 5-phosphate contacts are provided by residues Gly-224 and 245–246; that span reads GS.

The protein belongs to the PdxS/SNZ family.

The catalysed reaction is aldehydo-D-ribose 5-phosphate + D-glyceraldehyde 3-phosphate + L-glutamine = pyridoxal 5'-phosphate + L-glutamate + phosphate + 3 H2O + H(+). It participates in cofactor biosynthesis; pyridoxal 5'-phosphate biosynthesis. Its function is as follows. Catalyzes the formation of pyridoxal 5'-phosphate from ribose 5-phosphate (RBP), glyceraldehyde 3-phosphate (G3P) and ammonia. The ammonia is provided by PDX2. Can also use ribulose 5-phosphate and dihydroxyacetone phosphate as substrates, resulting from enzyme-catalyzed isomerization of RBP and G3P, respectively. Also plays an indirect role in resistance to singlet oxygen-generating photosensitizers. The polypeptide is Pyridoxal 5'-phosphate synthase subunit SNZERR (SNZERR) (Suberites domuncula (Sponge)).